Here is a 736-residue protein sequence, read N- to C-terminus: Catalase-peroxidase (736 aa).

An N-terminal signal peptide occupies residues Met-1–Ala-21. The tryptophyl-tyrosyl-methioninium (Trp-Tyr) (with M-250) cross-link spans Trp-102–Tyr-224. His-103 acts as the Proton acceptor in catalysis. Positions Tyr-224–Met-250 form a cross-link, tryptophyl-tyrosyl-methioninium (Tyr-Met) (with W-102). His-265 provides a ligand contact to heme b.

This sequence belongs to the peroxidase family. Peroxidase/catalase subfamily. As to quaternary structure, homodimer or homotetramer. Requires heme b as cofactor. Formation of the three residue Trp-Tyr-Met cross-link is important for the catalase, but not the peroxidase activity of the enzyme.

The enzyme catalyses H2O2 + AH2 = A + 2 H2O. It catalyses the reaction 2 H2O2 = O2 + 2 H2O. Functionally, bifunctional enzyme with both catalase and broad-spectrum peroxidase activity. The protein is Catalase-peroxidase of Shewanella woodyi (strain ATCC 51908 / MS32).